Consider the following 385-residue polypeptide: Probable dual-specificity RNA methyltransferase RlmN (385 aa).

The segment at 1–24 is disordered; the sequence is MTATTAESGNLLPLVSGRSRPPRH. The Proton acceptor role is filled by glutamate 114. Positions 120–364 constitute a Radical SAM core domain; that stretch reads YPQRATVCVS…AATVRDTRGR (245 aa). Residues cysteine 127 and cysteine 370 are joined by a disulfide bond. 3 residues coordinate [4Fe-4S] cluster: cysteine 134, cysteine 138, and cysteine 141. Residues 194–195, serine 228, 251–253, and asparagine 327 each bind S-adenosyl-L-methionine; these read GE and SLH. Cysteine 370 acts as the S-methylcysteine intermediate in catalysis.

This sequence belongs to the radical SAM superfamily. RlmN family. Requires [4Fe-4S] cluster as cofactor.

It localises to the cytoplasm. It carries out the reaction adenosine(2503) in 23S rRNA + 2 reduced [2Fe-2S]-[ferredoxin] + 2 S-adenosyl-L-methionine = 2-methyladenosine(2503) in 23S rRNA + 5'-deoxyadenosine + L-methionine + 2 oxidized [2Fe-2S]-[ferredoxin] + S-adenosyl-L-homocysteine. It catalyses the reaction adenosine(37) in tRNA + 2 reduced [2Fe-2S]-[ferredoxin] + 2 S-adenosyl-L-methionine = 2-methyladenosine(37) in tRNA + 5'-deoxyadenosine + L-methionine + 2 oxidized [2Fe-2S]-[ferredoxin] + S-adenosyl-L-homocysteine. In terms of biological role, specifically methylates position 2 of adenine 2503 in 23S rRNA and position 2 of adenine 37 in tRNAs. This chain is Probable dual-specificity RNA methyltransferase RlmN, found in Parafrankia sp. (strain EAN1pec).